Consider the following 329-residue polypeptide: Ig gamma-2C chain C region (329 aa).

A CH1 region spans residues A1–I97. C27 and C82 are disulfide-bonded. The segment at E98 to C113 is hinge. The segment at D114–R222 is CH2. Cystine bridges form between C143/C203 and C249/C307. The segment at G223–K329 is CH3.

The protein is Ig gamma-2C chain C region of Rattus norvegicus (Rat).